Reading from the N-terminus, the 227-residue chain is Exodeoxyribonuclease (227 aa).

It catalyses the reaction Exonucleolytic cleavage in the 3'- to 5'-direction to yield nucleoside 5'-phosphates.. Its function is as follows. 3'-5' exonuclease that preferentially uses ssDNA as substrate. Plays a role in group I intron homing. May play a role in the final step of host DNA degradation, by scavenging DNA into mononucleotides. In Escherichia coli (Bacteriophage T4), this protein is Exodeoxyribonuclease (dexA).